The following is a 349-amino-acid chain: Sterol-4-alpha-carboxylate 3-dehydrogenase ERG26, decarboxylating (349 aa).

Residues 11–17 (GGSGFLG), 62–63 (DL), and 84–86 (CAS) each bind NADP(+). Residues serine 124 and tyrosine 151 each coordinate substrate. Residues tyrosine 151, lysine 155, and 179–182 (PAGI) each bind NADP(+). Residue lysine 155 is the Proton donor of the active site.

The protein belongs to the 3-beta-HSD family. As to quaternary structure, heterotetramer of ERG25, ERG26, ERG27 and ERG28. ERG28 acts as a scaffold to tether ERG27 and other 4,4-demethylation-related enzymes, forming a demethylation enzyme complex, in the endoplasmic reticulum.

It localises to the endoplasmic reticulum membrane. It carries out the reaction 4beta-methylzymosterol-4alpha-carboxylate + NADP(+) = 3-dehydro-4-methylzymosterol + CO2 + NADPH. Its pathway is steroid biosynthesis; zymosterol biosynthesis; zymosterol from lanosterol: step 4/6. Its activity is regulated as follows. Inhibited by FR171456, a natural product with broad antifungal activity. Functionally, sterol-4-alpha-carboxylate 3-dehydrogenase; part of the third module of ergosterol biosynthesis pathway that includes the late steps of the pathway. ERG26 is a catalytic component of the C-4 demethylation complex that catalyzes the oxidative decarboxylation that results in a reduction of the 3-beta-hydroxy group at the C-3 carbon to an oxo group. The third module or late pathway involves the ergosterol synthesis itself through consecutive reactions that mainly occur in the endoplasmic reticulum (ER) membrane. Firstly, the squalene synthase ERG9 catalyzes the condensation of 2 farnesyl pyrophosphate moieties to form squalene, which is the precursor of all steroids. Squalene synthase is crucial for balancing the incorporation of farnesyl diphosphate (FPP) into sterol and nonsterol isoprene synthesis. Secondly, the squalene epoxidase ERG1 catalyzes the stereospecific oxidation of squalene to (S)-2,3-epoxysqualene, which is considered to be a rate-limiting enzyme in steroid biosynthesis. Then, the lanosterol synthase ERG7 catalyzes the cyclization of (S)-2,3 oxidosqualene to lanosterol, a reaction that forms the sterol core. In the next steps, lanosterol is transformed to zymosterol through a complex process involving various demethylation, reduction and desaturation reactions. The lanosterol 14-alpha-demethylase ERG11 (also known as CYP51) catalyzes C14-demethylation of lanosterol to produce 4,4'-dimethyl cholesta-8,14,24-triene-3-beta-ol, which is critical for ergosterol biosynthesis. The C-14 reductase ERG24 reduces the C14=C15 double bond of 4,4-dimethyl-cholesta-8,14,24-trienol to produce 4,4-dimethyl-cholesta-8,24-dienol. 4,4-dimethyl-cholesta-8,24-dienol is substrate of the C-4 demethylation complex ERG25-ERG26-ERG27 in which ERG25 catalyzes the three-step monooxygenation required for the demethylation of 4,4-dimethyl and 4alpha-methylsterols, ERG26 catalyzes the oxidative decarboxylation that results in a reduction of the 3-beta-hydroxy group at the C-3 carbon to an oxo group, and ERG27 is responsible for the reduction of the keto group on the C-3. ERG28 has a role as a scaffold to help anchor ERG25, ERG26 and ERG27 to the endoplasmic reticulum and ERG29 regulates the activity of the iron-containing C4-methylsterol oxidase ERG25. Then, the sterol 24-C-methyltransferase ERG6 catalyzes the methyl transfer from S-adenosyl-methionine to the C-24 of zymosterol to form fecosterol. The C-8 sterol isomerase ERG2 catalyzes the reaction which results in unsaturation at C-7 in the B ring of sterols and thus converts fecosterol to episterol. The sterol-C5-desaturase ERG3 then catalyzes the introduction of a C-5 double bond in the B ring to produce 5-dehydroepisterol. The C-22 sterol desaturase ERG5 further converts 5-dehydroepisterol into ergosta-5,7,22,24(28)-tetraen-3beta-ol by forming the C-22(23) double bond in the sterol side chain. Finally, ergosta-5,7,22,24(28)-tetraen-3beta-ol is substrate of the C-24(28) sterol reductase ERG4 to produce ergosterol. In Saccharomyces cerevisiae (strain ATCC 204508 / S288c) (Baker's yeast), this protein is Sterol-4-alpha-carboxylate 3-dehydrogenase ERG26, decarboxylating.